The sequence spans 253 residues: Protein C1orf43 homolog (253 aa).

Residues 11–31 form a helical membrane-spanning segment; it reads VNVVLVMAYGSLVFVLLFIFV.

The protein localises to the membrane. Its subcellular location is the golgi apparatus. It localises to the mitochondrion. General regulator of phagocytosis. Required to uptake Gram negative bacterium by macrophages. The sequence is that of Protein C1orf43 homolog from Mus musculus (Mouse).